The chain runs to 463 residues: Succinate--CoA ligase [ADP-forming] subunit beta, mitochondrial (463 aa).

The transit peptide at 1-53 directs the protein to the mitochondrion; it reads MAASVFYGRLLAVATLRNHRPRTALGAAAQVLGSSGLFNNHGLQVQQQQQRNL. An ATP-grasp domain is found at 61–288; it reads MELLQEAGVS…SNSAYRQKKI (228 aa). K78 is modified (N6-acetyllysine). Y84 carries the post-translational modification Phosphotyrosine. K88 bears the N6-acetyllysine; alternate mark. K88 carries the N6-succinyllysine; alternate modification. ATP-binding positions include K98 and 105–107; that span reads GRG. Residues K129, K139, K143, and K216 each carry the N6-acetyllysine modification. Positions 258 and 272 each coordinate Mg(2+). The residue at position 279 (S279) is a Phosphoserine. N323 is a substrate binding site. At T341 the chain carries Phosphothreonine. K368 is subject to N6-acetyllysine. Residue 380-382 participates in substrate binding; the sequence is GIM.

This sequence belongs to the succinate/malate CoA ligase beta subunit family. ATP-specific subunit beta subfamily. Heterodimer of an alpha and a beta subunit. The beta subunit determines specificity for ATP. Interacts with ALAS2. It depends on Mg(2+) as a cofactor.

The protein localises to the mitochondrion. The catalysed reaction is succinate + ATP + CoA = succinyl-CoA + ADP + phosphate. Its pathway is carbohydrate metabolism; tricarboxylic acid cycle; succinate from succinyl-CoA (ligase route): step 1/1. Its function is as follows. ATP-specific succinyl-CoA synthetase functions in the citric acid cycle (TCA), coupling the hydrolysis of succinyl-CoA to the synthesis of ATP and thus represents the only step of substrate-level phosphorylation in the TCA. The beta subunit provides nucleotide specificity of the enzyme and binds the substrate succinate, while the binding sites for coenzyme A and phosphate are found in the alpha subunit. The sequence is that of Succinate--CoA ligase [ADP-forming] subunit beta, mitochondrial from Macaca fascicularis (Crab-eating macaque).